Consider the following 546-residue polypeptide: CTP synthase (546 aa).

The tract at residues 1–267 is amidoligase domain; the sequence is MSKFVFVTGG…AQQTLELLNL (267 aa). Residue Ser-13 participates in CTP binding. Position 13 (Ser-13) interacts with UTP. ATP contacts are provided by residues 14-19 and Asp-71; that span reads SIGKGI. 2 residues coordinate Mg(2+): Asp-71 and Glu-141. CTP is bound by residues 148–150, 188–193, and Lys-224; these read DIE and KTKPTQ. UTP-binding positions include 188 to 193 and Lys-224; that span reads KTKPTQ. The 243-residue stretch at 292–534 folds into the Glutamine amidotransferase type-1 domain; sequence EIAIVGKYVQ…MKAALKGREE (243 aa). Residue Gly-354 coordinates L-glutamine. The active-site Nucleophile; for glutamine hydrolysis is Cys-381. Residues 382–385, Glu-405, and Arg-462 contribute to the L-glutamine site; that span reads LGMQ. Active-site residues include His-507 and Glu-509.

This sequence belongs to the CTP synthase family. Homotetramer.

The catalysed reaction is UTP + L-glutamine + ATP + H2O = CTP + L-glutamate + ADP + phosphate + 2 H(+). It carries out the reaction L-glutamine + H2O = L-glutamate + NH4(+). The enzyme catalyses UTP + NH4(+) + ATP = CTP + ADP + phosphate + 2 H(+). The protein operates within pyrimidine metabolism; CTP biosynthesis via de novo pathway; CTP from UDP: step 2/2. Allosterically activated by GTP, when glutamine is the substrate; GTP has no effect on the reaction when ammonia is the substrate. The allosteric effector GTP functions by stabilizing the protein conformation that binds the tetrahedral intermediate(s) formed during glutamine hydrolysis. Inhibited by the product CTP, via allosteric rather than competitive inhibition. Functionally, catalyzes the ATP-dependent amination of UTP to CTP with either L-glutamine or ammonia as the source of nitrogen. Regulates intracellular CTP levels through interactions with the four ribonucleotide triphosphates. The sequence is that of CTP synthase from Microcystis aeruginosa (strain NIES-843 / IAM M-2473).